A 132-amino-acid polypeptide reads, in one-letter code: Small ribosomal subunit protein uS8 (132 aa).

The protein belongs to the universal ribosomal protein uS8 family. In terms of assembly, part of the 30S ribosomal subunit. Contacts proteins S5 and S12.

In terms of biological role, one of the primary rRNA binding proteins, it binds directly to 16S rRNA central domain where it helps coordinate assembly of the platform of the 30S subunit. The protein is Small ribosomal subunit protein uS8 of Brucella abortus (strain S19).